Here is a 298-residue protein sequence, read N- to C-terminus: Zinc import ATP-binding protein ZnuC (298 aa).

In terms of domain architecture, ABC transporter spans 17 to 232 (IELRNAGVYR…PEYVRLFGSR (216 aa)). 49–56 (GPNGAGKS) contributes to the ATP binding site. Positions 273–298 (RGHCHVEDGHHHDHEHHHHEGGQPRA) are disordered. Positions 276-298 (CHVEDGHHHDHEHHHHEGGQPRA) are enriched in basic and acidic residues.

The protein belongs to the ABC transporter superfamily. Zinc importer (TC 3.A.1.15.5) family. As to quaternary structure, the complex is composed of two ATP-binding proteins (ZnuC), two transmembrane proteins (ZnuB) and a solute-binding protein (ZnuA).

The protein resides in the cell inner membrane. It carries out the reaction Zn(2+)(out) + ATP(in) + H2O(in) = Zn(2+)(in) + ADP(in) + phosphate(in) + H(+)(in). Part of the ABC transporter complex ZnuABC involved in zinc import. Responsible for energy coupling to the transport system. The protein is Zinc import ATP-binding protein ZnuC of Brucella suis biovar 1 (strain 1330).